The chain runs to 168 residues: Small ribosomal subunit protein uS5 (168 aa).

Residues 14–77 enclose the S5 DRBM domain; that stretch reads FEERVVSINR…EAAKKNLITV (64 aa).

It belongs to the universal ribosomal protein uS5 family. As to quaternary structure, part of the 30S ribosomal subunit. Contacts proteins S4 and S8.

In terms of biological role, with S4 and S12 plays an important role in translational accuracy. Its function is as follows. Located at the back of the 30S subunit body where it stabilizes the conformation of the head with respect to the body. This is Small ribosomal subunit protein uS5 from Lactococcus lactis subsp. cremoris (strain MG1363).